A 172-amino-acid polypeptide reads, in one-letter code: Conglutin-7 (172 aa).

Residues 1-21 form the signal peptide; it reads MAKLTILVALALFLLAAHASA. 4 disulfide bridges follow: C33–C116, C45–C103, C104–C152, and C118–C160. The tract at residues 54-98 is disordered; sequence QRDEDSYGRDPYSPSQDPYSPSQDPDRRDPYSPSPYDRRGAGSSQ. Over residues 62–76 the composition is skewed to low complexity; that stretch reads RDPYSPSQDPYSPSQ. 4-hydroxyproline is present on residues P67, P74, and P86. The segment covering 77–98 has biased composition (basic and acidic residues); it reads DPDRRDPYSPSPYDRRGAGSSQ.

Belongs to the 2S seed storage albumins family. Post-translationally, the hydroxyproline modifications determined by mass spectrometry are probably 4-hydroxyproline as determined for other extracellular plant proteins. Expressed in seeds, not expressed in leaves, roots and pegs.

Its function is as follows. Weak inhibitor of trypsin. The chain is Conglutin-7 from Arachis hypogaea (Peanut).